The chain runs to 483 residues: Pre-glycoprotein polyprotein GP complex (483 aa).

The N-myristoyl glycine; by host moiety is linked to residue Gly2. Residues 2 to 17 are Extracellular-facing; the sequence is GQFISFMQEIPIFLQE. A helical membrane pass occupies residues 18–32; it reads ALNIALVAVSLICIV. A topological domain (cytoplasmic) is located at residue Lys33. The helical transmembrane segment at 34–53 threads the bilayer; it reads GLVNLYRCGLFQLMVFLVLA. Extracellular-side segments run 54 to 58 and 59 to 422; these read GRSCS and EETF…TLVD. Residue Cys57 coordinates Zn(2+). Asn83 and Asn95 each carry an N-linked (GlcNAc...) asparagine; by host glycan. 6 cysteine pairs are disulfide-bonded: Cys92–Cys224, Cys134–Cys162, Cys205–Cys211, Cys269–Cys282, Cys291–Cys300, and Cys354–Cys375. N-linked (GlcNAc...) asparagine; by host glycosylation is found at Asn164 and Asn176. N-linked (GlcNAc...) asparagine; by host glycosylation is found at Asn355, Asn363, Asn380, and Asn385. The chain crosses the membrane as a helical span at residues 423–443; sequence ICFWSTVFFTSTLFLHLIGFP. The Cytoplasmic segment spans residues 444 to 483; the sequence is THEHIRGEGCPLPHRLNSMGGCRCGKYLPLKKPTIWHRRH. Zn(2+) is bound by residues His445, His447, Cys453, His457, Cys465, Cys467, and His483.

This sequence belongs to the arenaviridae GPC protein family. In terms of assembly, homotetramer; disulfide-linked. Homotetramer. GP2 homotetramers bind through ionic interactions with GP1 homotetramers to form the GP complex together with the stable signal peptide. The GP-C polyprotein interacts with the host protease MBTPS1/SKI-1 resulting in the polyprotein processing. Specific enzymatic cleavages in vivo yield mature proteins. GP-C polyprotein is cleaved in the endoplasmic reticulum by the host protease MBTPS1. Only cleaved glycoprotein is incorporated into virions. In terms of processing, the SSP remains stably associated with the GP complex following cleavage by signal peptidase and plays crucial roles in the trafficking of GP through the secretory pathway. Post-translationally, myristoylation is necessary for GP2-mediated fusion activity.

It is found in the virion membrane. It localises to the host endoplasmic reticulum membrane. Its subcellular location is the host Golgi apparatus membrane. The protein localises to the host cell membrane. In terms of biological role, class I viral fusion protein that directs fusion of viral and host endosomal membranes, leading to delivery of the nucleocapsid into the cytoplasm. Membrane fusion is mediated by irreversible conformational changes induced upon acidification in the endosome. Stable signal peptide (SSP): cleaved and functions as a signal peptide. In addition, it is also retained as the third component of the GP complex. The SSP is required for efficient glycoprotein expression, post-translational maturation cleavage of GP1 and GP2, glycoprotein transport to the cell surface plasma membrane, formation of infectious virus particles, and acid pH-dependent glycoprotein-mediated cell fusion. Its function is as follows. Interacts with the host receptor. The protein is Pre-glycoprotein polyprotein GP complex of Artibeus (neotropical fruit bats).